The following is a 122-amino-acid chain: Large ribosomal subunit protein uL14 (122 aa).

Belongs to the universal ribosomal protein uL14 family. In terms of assembly, part of the 50S ribosomal subunit. Forms a cluster with proteins L3 and L19. In the 70S ribosome, L14 and L19 interact and together make contacts with the 16S rRNA in bridges B5 and B8.

Functionally, binds to 23S rRNA. Forms part of two intersubunit bridges in the 70S ribosome. This Microcystis aeruginosa (strain NIES-843 / IAM M-2473) protein is Large ribosomal subunit protein uL14.